Here is a 336-residue protein sequence, read N- to C-terminus: Protein-lysine N-methyltransferase EFM3 (336 aa).

Residues Trp-147, 173–175 (GTG), Asp-196, Leu-232, and Ala-251 each bind S-adenosyl-L-methionine.

The protein belongs to the class I-like SAM-binding methyltransferase superfamily. EEF2KMT family.

Its subcellular location is the cytoplasm. Functionally, S-adenosyl-L-methionine-dependent protein-lysine N-methyltransferase that methylates elongation factor 2. The polypeptide is Protein-lysine N-methyltransferase EFM3 (Chaetomium thermophilum (strain DSM 1495 / CBS 144.50 / IMI 039719) (Thermochaetoides thermophila)).